We begin with the raw amino-acid sequence, 399 residues long: Acetate kinase 2 (399 aa).

Asparagine 10 contributes to the Mg(2+) binding site. Lysine 17 is an ATP binding site. Arginine 89 serves as a coordination point for substrate. The Proton donor/acceptor role is filled by aspartate 146. Residues 206–210 (HLGNG), 281–283 (DCR), and 329–333 (GIGEN) contribute to the ATP site. Glutamate 384 provides a ligand contact to Mg(2+).

This sequence belongs to the acetokinase family. Homodimer. It depends on Mg(2+) as a cofactor. Requires Mn(2+) as cofactor.

The protein localises to the cytoplasm. The catalysed reaction is acetate + ATP = acetyl phosphate + ADP. It functions in the pathway metabolic intermediate biosynthesis; acetyl-CoA biosynthesis; acetyl-CoA from acetate: step 1/2. Catalyzes the formation of acetyl phosphate from acetate and ATP. Can also catalyze the reverse reaction. The polypeptide is Acetate kinase 2 (Neisseria meningitidis serogroup B (strain ATCC BAA-335 / MC58)).